Reading from the N-terminus, the 227-residue chain is Orotidine 5'-phosphate decarboxylase (227 aa).

Substrate is bound by residues Asp-8, Lys-30, 59–68 (DLKLYDIPYT), Thr-118, Arg-178, Gln-187, Gly-207, and Arg-208. The active-site Proton donor is the Lys-61.

It belongs to the OMP decarboxylase family. Type 1 subfamily. Homodimer.

The catalysed reaction is orotidine 5'-phosphate + H(+) = UMP + CO2. It functions in the pathway pyrimidine metabolism; UMP biosynthesis via de novo pathway; UMP from orotate: step 2/2. In terms of biological role, catalyzes the decarboxylation of orotidine 5'-monophosphate (OMP) to uridine 5'-monophosphate (UMP). This is Orotidine 5'-phosphate decarboxylase from Helicobacter pylori (strain J99 / ATCC 700824) (Campylobacter pylori J99).